The primary structure comprises 487 residues: Betaine aldehyde dehydrogenase (487 aa).

The K(+) site is built by S26 and D93. NAD(+) is bound at residue 150–152; that stretch reads GAW. K162 acts as the Charge relay system in catalysis. Residues 176-179 and 229-232 contribute to the NAD(+) site; these read KPSE and SVPT. L244 lines the K(+) pocket. E250 functions as the Proton acceptor in the catalytic mechanism. Residues G252, C284, and E384 each contribute to the NAD(+) site. Catalysis depends on C284, which acts as the Nucleophile. A Cysteine sulfenic acid (-SOH) modification is found at C284. K(+) is bound by residues K454 and G457. The active-site Charge relay system is E461.

Belongs to the aldehyde dehydrogenase family. In terms of assembly, dimer of dimers. The cofactor is K(+).

It catalyses the reaction betaine aldehyde + NAD(+) + H2O = glycine betaine + NADH + 2 H(+). Its pathway is amine and polyamine biosynthesis; betaine biosynthesis via choline pathway; betaine from betaine aldehyde: step 1/1. In terms of biological role, involved in the biosynthesis of the osmoprotectant glycine betaine. Catalyzes the irreversible oxidation of betaine aldehyde to the corresponding acid. The chain is Betaine aldehyde dehydrogenase from Rhizobium johnstonii (strain DSM 114642 / LMG 32736 / 3841) (Rhizobium leguminosarum bv. viciae).